The sequence spans 436 residues: 3-ketoacyl-CoA thiolase (436 aa).

Catalysis depends on C99, which acts as the Acyl-thioester intermediate. Residues H392 and C422 each act as proton acceptor in the active site.

Belongs to the thiolase-like superfamily. Thiolase family. As to quaternary structure, heterotetramer of two alpha chains (FadJ) and two beta chains (FadI).

The protein localises to the cytoplasm. It carries out the reaction an acyl-CoA + acetyl-CoA = a 3-oxoacyl-CoA + CoA. It participates in lipid metabolism; fatty acid beta-oxidation. Its function is as follows. Catalyzes the final step of fatty acid oxidation in which acetyl-CoA is released and the CoA ester of a fatty acid two carbons shorter is formed. This is 3-ketoacyl-CoA thiolase from Escherichia coli O8 (strain IAI1).